The following is a 726-amino-acid chain: DNA ligase (726 aa).

Residues 34 to 38 (DAEYD), 83 to 84 (SL), and Glu-115 contribute to the NAD(+) site. Lys-117 (N6-AMP-lysine intermediate) is an active-site residue. NAD(+)-binding residues include Arg-138, Glu-190, Lys-306, and Lys-330. Residues Cys-424, Cys-427, Cys-442, and Cys-448 each contribute to the Zn(2+) site. In terms of domain architecture, BRCT spans 608–698 (SRGNALAGKT…RTADDQATPA (91 aa)). The tract at residues 690-726 (TADDQATPASDRRAATASVPPSDDAPGSPRQLDFDLT) is disordered.

Belongs to the NAD-dependent DNA ligase family. LigA subfamily. It depends on Mg(2+) as a cofactor. The cofactor is Mn(2+).

The catalysed reaction is NAD(+) + (deoxyribonucleotide)n-3'-hydroxyl + 5'-phospho-(deoxyribonucleotide)m = (deoxyribonucleotide)n+m + AMP + beta-nicotinamide D-nucleotide.. Functionally, DNA ligase that catalyzes the formation of phosphodiester linkages between 5'-phosphoryl and 3'-hydroxyl groups in double-stranded DNA using NAD as a coenzyme and as the energy source for the reaction. It is essential for DNA replication and repair of damaged DNA. The chain is DNA ligase from Roseiflexus sp. (strain RS-1).